The sequence spans 104 residues: L-rhamnose mutarotase (104 aa).

Tyr18 contributes to the substrate binding site. The Proton donor role is filled by His22. Substrate-binding positions include Tyr41 and 76–77 (WW).

The protein belongs to the rhamnose mutarotase family. In terms of assembly, homodimer.

The protein resides in the cytoplasm. It carries out the reaction alpha-L-rhamnose = beta-L-rhamnose. Its pathway is carbohydrate metabolism; L-rhamnose metabolism. Functionally, involved in the anomeric conversion of L-rhamnose. The chain is L-rhamnose mutarotase from Bacillus subtilis (strain 168).